The chain runs to 345 residues: cAMP-responsive element modulator (345 aa).

Residues 88 to 147 (VQVAAIAETDESAESEGVIDSHKRREILSRRPSYRKILNELSSDVPGVPKIEEERSEEEG) form the KID domain. 5 positions are modified to phosphoserine: Ser-102, Ser-129, Ser-271, Ser-274, and Ser-277. The region spanning 286-345 (TRKRELRLMKNREAAKECRRRKKEYVKCLESRVAVLEVQNKKLIEELETLKDICSPKTDY) is the bZIP domain. The segment at 287–312 (RKRELRLMKNREAAKECRRRKKEYVK) is basic motif. Residues 314-335 (LESRVAVLEVQNKKLIEELETL) form a leucine-zipper region.

Belongs to the bZIP family. As to quaternary structure, binds DNA as a dimer. Interacts with FHL5. Interacts with CDC34. May interact with TSSK4. Isoform 9 is ubiquitinated by CDC34 and RAD6B in order to be degraded by the proteasome. Post-translationally, stimulated by phosphorylation. Phosphorylated on Ser-116 by TSSK4 in vitro. As to expression, expressed in testes (round spermatids) (at protein level). Isoform 14 is the major activator form in testes.

The protein resides in the nucleus. The protein localises to the cytoplasm. Transcriptional regulator that binds the cAMP response element (CRE), a sequence present in many viral and cellular promoters. Isoforms are either transcriptional activators or repressors. Plays a role in spermatogenesis and is involved in spermatid maturation. Functionally, may play a role in the regulation of the circadian clock: acts as a transcriptional repressor of the core circadian component PER1 by directly binding to cAMP response elements in its promoter. The chain is cAMP-responsive element modulator from Homo sapiens (Human).